Reading from the N-terminus, the 102-residue chain is Co-chaperonin GroES (102 aa).

It belongs to the GroES chaperonin family. As to quaternary structure, heptamer of 7 subunits arranged in a ring. Interacts with the chaperonin GroEL.

The protein resides in the cytoplasm. Functionally, together with the chaperonin GroEL, plays an essential role in assisting protein folding. The GroEL-GroES system forms a nano-cage that allows encapsulation of the non-native substrate proteins and provides a physical environment optimized to promote and accelerate protein folding. GroES binds to the apical surface of the GroEL ring, thereby capping the opening of the GroEL channel. The chain is Co-chaperonin GroES from Chlamydia pneumoniae (Chlamydophila pneumoniae).